The sequence spans 876 residues: E3 ubiquitin-protein ligase TRIM71 (876 aa).

Residues 12–90 (CPLCKEMCGS…ALKLRCPICD (79 aa)) form an RING-type zinc finger. Residues 26-40 (SSNSSTSSSSSQTSG) show a composition bias toward low complexity. Disordered regions lie at residues 26–46 (SSNSSTSSSSSQTSGSSGGGG) and 128–192 (KNGR…AALL). Positions 137–148 (PAAGSGAGGGGA) are enriched in gly residues. Residues 160 to 182 (RAAAAASSPAAGSAAPSASSSSS) show a composition bias toward low complexity. The B box-type 1; atypical zinc finger occupies 200–247 (QGEPRCSSCDEGNAASSRCLDCQEHLCDNCVRAHQRVRLTKDHFIERF). Cys-205, Cys-208, Cys-229, His-233, Cys-286, His-289, Cys-309, and His-314 together coordinate Zn(2+). The B box-type 2 zinc finger occupies 281–322 (ERASYCQHHDDEVLHFYCDTCSVPICRECTMGRHVGHSFIYL). 2 coiled-coil regions span residues 344 to 373 (RQAIQLSIEQAQAVAEQVEMKAKVVQSEVK) and 399 to 434 (QVKAKSLYLQVEKLRQNLNKLDNTISAVQQVLEEGR). Residues 487-588 (SSGAFAPLTK…IENSPFKVVV (102 aa)) form a Filamin repeat. 6 NHL repeats span residues 601-644 (GLSF…FKPC), 648-691 (HHKF…FTFE), 695-738 (ILKF…FGPD), 742-785 (LNKY…IHAD), 789-832 (ARFL…FESN), and 836-876 (LCKF…ILVF).

This sequence belongs to the TRIM/RBCC family.

The protein resides in the cytoplasm. The protein localises to the P-body. It carries out the reaction S-ubiquitinyl-[E2 ubiquitin-conjugating enzyme]-L-cysteine + [acceptor protein]-L-lysine = [E2 ubiquitin-conjugating enzyme]-L-cysteine + N(6)-ubiquitinyl-[acceptor protein]-L-lysine.. The protein operates within protein modification; protein ubiquitination. Functionally, E3 ubiquitin-protein ligase that cooperates with the microRNAs (miRNAs) machinery and promotes embryonic stem cells proliferation and maintenance. Binds to miRNAs and participates in post-transcriptional repression of transcripts. Required to maintain proliferation and prevent premature differentiation of neural progenitor cells during early neural development. The protein is E3 ubiquitin-protein ligase TRIM71 (TRIM71) of Gallus gallus (Chicken).